The following is a 539-amino-acid chain: 2,3-dihydroxybenzoate-AMP ligase (539 aa).

Gly191 serves as a coordination point for ATP. Substrate contacts are provided by residues 234–235 and Ser240; that span reads HN. ATP-binding residues include Gly307, Val329, Asp413, Arg428, and Lys519. Residue Lys519 participates in substrate binding.

The protein belongs to the ATP-dependent AMP-binding enzyme family.

It is found in the cytoplasm. It catalyses the reaction 2,3-dihydroxybenzoate + holo-[ACP] + ATP = 2,3-dihydroxybenzoyl-[ACP] + AMP + diphosphate. It participates in siderophore biosynthesis; bacillibactin biosynthesis. In terms of biological role, involved in the biosynthesis of the catecholic siderophore bacillibactin. Catalyzes the activation of the carboxylate group of 2,3-dihydroxy-benzoate (DHB), via ATP-dependent PPi exchange reactions, to the acyladenylate. This chain is 2,3-dihydroxybenzoate-AMP ligase, found in Bacillus subtilis (strain 168).